The primary structure comprises 513 residues: Meiotically up-regulated gene 133 protein (513 aa).

It belongs to the UPF0300 family.

It is found in the golgi apparatus. The protein resides in the vacuole membrane. Functionally, has a role in meiosis. This chain is Meiotically up-regulated gene 133 protein (mug133), found in Schizosaccharomyces pombe (strain 972 / ATCC 24843) (Fission yeast).